An 800-amino-acid polypeptide reads, in one-letter code: Mitogen-activated protein kinase kinase kinase 20 (800 aa).

N-acetylserine is present on Ser2. Residues Ser2, Ser3, and Ser7 each carry the phosphoserine; by autocatalysis modification. The Protein kinase domain occupies 16-277 (LQFFENCGGG…SLPDKCNSFL (262 aa)). ATP contacts are provided by residues 22-30 (CGGGSFGSV) and Lys45. The active-site Proton acceptor is the Asp133. A Phosphothreonine; by autocatalysis modification is found at Thr161. Position 165 is a phosphoserine; by autocatalysis (Ser165). Ser275 carries the post-translational modification Phosphoserine. The segment at 287-308 (IEATLERLKKLERDLSFKEQEL) is leucine-zipper. Ser302 bears the Phosphoserine; by autocatalysis mark. Phosphoserine occurs at positions 339, 429, 434, 454, and 567. Residues 339–410 (WTEDDVYCWV…KSAIEKLTHD (72 aa)) form the SAM domain. Phosphothreonine; by autocatalysis is present on Thr586. The residue at position 587 (Ser587) is a Phosphoserine; by autocatalysis. Residues Ser593 and Ser599 each carry the phosphoserine modification. Residue Thr628 is modified to Phosphothreonine. Phosphoserine is present on residues Ser633, Ser637, and Ser648. 2 positions are modified to phosphoserine; by autocatalysis: Ser649 and Ser660. Positions 652-666 (LNSRDSGFSSGNTDT) are enriched in polar residues. A disordered region spans residues 652–800 (LNSRDSGFSS…RGDHRGWRNF (149 aa)). At Thr664 the chain carries Phosphothreonine; by autocatalysis. A compositionally biased stretch (basic and acidic residues) spans 667–678 (SSERGRYSDRSR). A sensing domain (S) region spans residues 670–713 (RGRYSDRSRNKYGRGSISLNSSPRGRYSGKSQHSTPSRGRYPGK). Ser685 carries the post-translational modification Phosphoserine. Polar residues-rich tracts occupy residues 686–706 (ISLN…STPS) and 717–726 (VSQSALNPHQ). Residues Ser718 and Ser720 each carry the phosphoserine; by autocatalysis modification. 2 positions are modified to phosphoserine: Ser727 and Ser733. Basic and acidic residues predominate over residues 728-738 (PDFKRSPRDLH). Phosphothreonine; by autocatalysis is present on Thr742. Basic and acidic residues-rich tracts occupy residues 750 to 763 (PETD…DSKV) and 785 to 800 (TNKE…WRNF). Residues 774–800 (RKKPHRPSPAKTNKERARGDHRGWRNF) are C-terminal domain (CTD).

The protein belongs to the protein kinase superfamily. STE Ser/Thr protein kinase family. MAP kinase kinase kinase subfamily. Homodimer. Interacts with ZNF33A. Component of a signaling complex containing at least AKAP13, PKN1, MAPK14, MAP3K20 and MAP2K3. Within this complex, AKAP13 interacts directly with PKN1, which in turn recruits MAPK14, MAP2K3 and MAP3K20. Interacts with EIF2AK4/GCN2; promoting EIF2AK4/GCN2 kinase activity. As to quaternary structure, interacts with isoform ZAKbeta. In terms of assembly, interacts with isoform ZAKalpha. Mg(2+) is required as a cofactor. Post-translationally, activated by phosphorylation by PKN1, followed by autophosphorylation on Thr-161 and Ser-165. Autophosphorylation in response to ribotoxic stress promotes dissociation from colliding ribosomes and activation. Ubiquitously expressed. Isoform ZAKbeta is the predominant form in all tissues examined, except for liver, in which isoform ZAKalpha is more highly expressed.

Its subcellular location is the cytoplasm. It localises to the nucleus. It carries out the reaction L-seryl-[protein] + ATP = O-phospho-L-seryl-[protein] + ADP + H(+). The enzyme catalyses L-threonyl-[protein] + ATP = O-phospho-L-threonyl-[protein] + ADP + H(+). Its activity is regulated as follows. Activated in response to stress, such as ribosomal stress, osmotic shock and ionizing radiation. Activated by phosphorylation by PKN1, followed by autophosphorylation on Thr-161 and Ser-165. Inhibited by nilotinib, sorafenib, dabrafenib, rebastinib and vemurafenib. Selectively inhibited by N-(3)-((1H-Pyrazolo[3,4-b]pyridin-5-yl)ethynyl)benzenesulfonamide compound 3h. Selectively inhibited by 1,2,3-triazole benzenesulfonamides. Its function is as follows. Stress-activated component of a protein kinase signal transduction cascade that promotes programmed cell death in response to various stress, such as ribosomal stress, osmotic shock and ionizing radiation. Acts by catalyzing phosphorylation of MAP kinase kinases, leading to activation of the JNK (MAPK8/JNK1, MAPK9/JNK2 and/or MAPK10/JNK3) and MAP kinase p38 (MAPK11, MAPK12, MAPK13 and/or MAPK14) pathways. Activates JNK through phosphorylation of MAP2K4/MKK4 and MAP2K7/MKK7, and MAP kinase p38 gamma (MAPK12) via phosphorylation of MAP2K3/MKK3 and MAP2K6/MKK6. Involved in stress associated with adrenergic stimulation: contributes to cardiac decompensation during periods of acute cardiac stress. May be involved in regulation of S and G2 cell cycle checkpoint by mediating phosphorylation of CHEK2. Key component of the stress-activated protein kinase signaling cascade in response to ribotoxic stress or UV-B irradiation. Acts as the proximal sensor of ribosome collisions during the ribotoxic stress response (RSR): directly binds to the ribosome by inserting its flexible C-terminus into the ribosomal intersubunit space, thereby acting as a sentinel for colliding ribosomes. Upon ribosome collisions, activates either the stress-activated protein kinase signal transduction cascade or the integrated stress response (ISR), leading to programmed cell death or cell survival, respectively. Dangerous levels of ribosome collisions trigger the autophosphorylation and activation of MAP3K20, which dissociates from colliding ribosomes and phosphorylates MAP kinase kinases, leading to activation of the JNK and MAP kinase p38 pathways that promote programmed cell death. Less dangerous levels of ribosome collisions trigger the integrated stress response (ISR): MAP3K20 activates EIF2AK4/GCN2 independently of its protein-kinase activity, promoting EIF2AK4/GCN2-mediated phosphorylation of EIF2S1/eIF-2-alpha. Also part of the stress-activated protein kinase signaling cascade triggering the NLRP1 inflammasome in response to UV-B irradiation: ribosome collisions activate MAP3K20, which directly phosphorylates NLRP1, leading to activation of the NLRP1 inflammasome and subsequent pyroptosis. NLRP1 is also phosphorylated by MAP kinase p38 downstream of MAP3K20. Also acts as a histone kinase by phosphorylating histone H3 at 'Ser-28' (H3S28ph). In terms of biological role, isoform that lacks the C-terminal region that mediates ribosome-binding: does not act as a sensor of ribosome collisions in response to ribotoxic stress. May act as an antagonist of isoform ZAKalpha: interacts with isoform ZAKalpha, leading to decrease the expression of isoform ZAKalpha. This chain is Mitogen-activated protein kinase kinase kinase 20, found in Homo sapiens (Human).